Here is a 247-residue protein sequence, read N- to C-terminus: NADH dehydrogenase [ubiquinone] flavoprotein 2, mitochondrial (247 aa).

The N-terminal 40 residues, M1–H40, are a transit peptide targeting the mitochondrion. 4 residues coordinate [2Fe-2S] cluster: C135, C140, C176, and C180. The disordered stretch occupies residues N211 to L247.

It belongs to the complex I 24 kDa subunit family. In terms of assembly, complex I is composed of 45 different subunits. This is a component of the flavoprotein-sulfur (FP) fragment of the enzyme. It depends on [2Fe-2S] cluster as a cofactor.

Its subcellular location is the mitochondrion inner membrane. It carries out the reaction a ubiquinone + NADH + 5 H(+)(in) = a ubiquinol + NAD(+) + 4 H(+)(out). Functionally, core subunit of the mitochondrial membrane respiratory chain NADH dehydrogenase (Complex I) that is believed to belong to the minimal assembly required for catalysis. Complex I functions in the transfer of electrons from NADH to the respiratory chain. The immediate electron acceptor for the enzyme is believed to be ubiquinone. This chain is NADH dehydrogenase [ubiquinone] flavoprotein 2, mitochondrial (ndufv2), found in Dictyostelium discoideum (Social amoeba).